The chain runs to 475 residues: Sensor histidine kinase QseE (475 aa).

Residues M1 to Q13 are Cytoplasmic-facing. Residues L14–W34 form a helical membrane-spanning segment. At Q35–Q173 the chain is on the periplasmic side. The helical transmembrane segment at Y174–T194 threads the bilayer. The Cytoplasmic portion of the chain corresponds to R195–K475. In terms of domain architecture, Histidine kinase spans H256–K472. Residue H259 is modified to Phosphohistidine; by autocatalysis.

In terms of processing, autophosphorylated.

It is found in the cell inner membrane. It carries out the reaction ATP + protein L-histidine = ADP + protein N-phospho-L-histidine.. Functionally, member of the two-component regulatory system QseF/QseE involved in the regulation of virulence and metabolism in EHEC. Required for pedestal formation in host epithelial cells during infection. Autophosphorylates in response to epinephrine, sulfate or phosphate and then probably transfers its phosphate group to QseF. The sequence is that of Sensor histidine kinase QseE (qseE) from Escherichia coli O157:H7.